Here is a 270-residue protein sequence, read N- to C-terminus: MMLRLLSSLLLVAVASGYGPPSSHSSSRVVHGEDAVPYSWPWQVSLQYEKSGSFYHTCGGSLIAPDWVVTAGHCISRDLTYQVVLGEYNLAVKEGPEQVIPINSEELFVHPLWNRSCVACGNDIALIKLSRSAQLGDAVQLASLPPAGDILPNKTPCYITGWGRLYTNGPLPDKLQQARLPVVDYKHCSRWNWWGSTVKKTMVCAGGYIRSGCNGDSGGPLNCPTEDGGWQVHGVTSFVSAFGCNFIWKPTVFTRVSAFIDWIEETIASH.

Positions 1 to 15 (MMLRLLSSLLLVAVA) form a signal peptide, or 16. Residues 16 to 28 (SGYGPPSSHSSSR) constitute a propeptide, activation peptide. A Peptidase S1 domain is found at 29–268 (VVHGEDAVPY…FIDWIEETIA (240 aa)). The cysteines at positions 58 and 74 are disulfide-linked. His-73 functions as the Charge relay system in the catalytic mechanism. N-linked (GlcNAc...) asparagine glycosylation occurs at Asn-114. A disulfide bridge connects residues Cys-117 and Cys-120. Residue Asp-123 is the Charge relay system of the active site. Disulfide bonds link Cys-157–Cys-223, Cys-188–Cys-204, and Cys-213–Cys-244. The active-site Charge relay system is the Ser-217.

Belongs to the peptidase S1 family. Elastase subfamily.

It carries out the reaction Preferential cleavage: Ala-|-Xaa. Does not hydrolyze elastin.. Functionally, efficient protease with alanine specificity but only little elastolytic activity. This Homo sapiens (Human) protein is Chymotrypsin-like elastase family member 3A (CELA3A).